Consider the following 1070-residue polypeptide: DNA-directed RNA polymerase subunit beta (1070 aa).

Belongs to the RNA polymerase beta chain family. As to quaternary structure, in plastids the minimal PEP RNA polymerase catalytic core is composed of four subunits: alpha, beta, beta', and beta''. When a (nuclear-encoded) sigma factor is associated with the core the holoenzyme is formed, which can initiate transcription.

Its subcellular location is the plastid. It is found in the chloroplast. It catalyses the reaction RNA(n) + a ribonucleoside 5'-triphosphate = RNA(n+1) + diphosphate. Functionally, DNA-dependent RNA polymerase catalyzes the transcription of DNA into RNA using the four ribonucleoside triphosphates as substrates. This Spinacia oleracea (Spinach) protein is DNA-directed RNA polymerase subunit beta.